The chain runs to 525 residues: GMP synthase [glutamine-hydrolyzing] (525 aa).

Positions 13–202 (TILVLDFGSQ…AVEICQAAQT (190 aa)) constitute a Glutamine amidotransferase type-1 domain. Catalysis depends on cysteine 89, which acts as the Nucleophile. Active-site residues include histidine 176 and glutamate 178. One can recognise a GMPS ATP-PPase domain in the interval 203–400 (WTMENFIDTE…LGISHELVWR (198 aa)). Residue 231 to 237 (SGGVDST) participates in ATP binding. Arginine 304, aspartate 462, lysine 517, and glutamate 523 together coordinate XMP.

Homodimer. Mg(2+) serves as cofactor.

The protein localises to the cytoplasm. The protein resides in the cytosol. It catalyses the reaction XMP + L-glutamine + ATP + H2O = GMP + L-glutamate + AMP + diphosphate + 2 H(+). It participates in purine metabolism; GMP biosynthesis; GMP from XMP (L-Gln route): step 1/1. Catalyzes the conversion of xanthine monophosphate (XMP) to GMP in the presence of glutamine and ATP through an adenyl-XMP intermediate. This chain is GMP synthase [glutamine-hydrolyzing] (GUA1), found in Eremothecium gossypii (strain ATCC 10895 / CBS 109.51 / FGSC 9923 / NRRL Y-1056) (Yeast).